The chain runs to 425 residues: MNAMLETPELPAVFDGVKLAAVAAVLYVIVRCLNLKSPTAPPDLYFQDSGLSRFLLKSCPLLTKEYIPPLIWGKSGHIQTALYGKMGRVRSPHPYGHRKFITMSDGATSTFDLFEPLAEHCVGDDITMVICPGIANHSEKQYIRTFVDYAQKNGYRCAVLNHLGALPNIELTSPRMFTYGCTWEFGAMVNYIKRTYPQTQLVVVGFSLGGNIVCKYLGETQANQEKVLCCVSVCQGYSALRAQETFMQWDQCRRFYNFLMADNMKKIILSHRQALFGDHVKKPQSLEDTDLSRLYTATSLMQIDDNVMRKFHGYNSLKEYYEEESCMRYLHRIYVPLMLVNAADDPLVHESLLTIPKSLSEKRENVMFVLPLHGGHLGFFEGSVLFPEPLTWMDKLVVEYANAICQWERNKSQCSDTEQMEAELE.

Topologically, residues 1–9 are cytoplasmic; that stretch reads MNAMLETPE. The chain crosses the membrane as a helical; Signal-anchor for type II membrane protein span at residues 10–30; it reads LPAVFDGVKLAAVAAVLYVIV. Residues 31–425 lie on the Extracellular side of the membrane; that stretch reads RCLNLKSPTA…DTEQMEAELE (395 aa). Residues 128–382 enclose the AB hydrolase-1 domain; the sequence is MVICPGIANH…HGGHLGFFEG (255 aa). A glycan (N-linked (GlcNAc...) asparagine) is linked at N136. The active-site Nucleophile is the S207. Active-site charge relay system residues include D345 and H376. N410 carries N-linked (GlcNAc...) asparagine glycosylation.

Belongs to the AB hydrolase superfamily. AB hydrolase 4 family. In terms of tissue distribution, widely expressed with higher expression in testis. Expressed by vascular smooth muscle cells, non vascular smooth muscle cells and heart.

The protein localises to the cell membrane. The protein resides in the cytoplasmic vesicle. It localises to the secretory vesicle. Its subcellular location is the acrosome membrane. The enzyme catalyses Hydrolyzes glycerol monoesters of long-chain fatty acids.. The catalysed reaction is an acetyl ester + H2O = an aliphatic alcohol + acetate + H(+). It carries out the reaction a triacylglycerol + H2O = a diacylglycerol + a fatty acid + H(+). It catalyses the reaction 2-(5Z,8Z,11Z,14Z-eicosatetraenoyl)-glycerol + H2O = glycerol + (5Z,8Z,11Z,14Z)-eicosatetraenoate + H(+). The enzyme catalyses a butanoate ester + H2O = an aliphatic alcohol + butanoate + H(+). The catalysed reaction is hexadecanoate ester + H2O = an aliphatic alcohol + hexadecanoate + H(+). Its activity is regulated as follows. Acylglycerol lipase activity is activated upon binding to progesterone. Functionally, progesterone-dependent acylglycerol lipase that catalyzes hydrolysis of endocannabinoid arachidonoylglycerol (AG) from cell membrane. Acts as a progesterone receptor: progesterone-binding activates the acylglycerol lipase activity, mediating degradation of 1-arachidonoylglycerol (1AG) and 2-arachidonoylglycerol (2AG) to glycerol and arachidonic acid (AA). Also displays an ester hydrolase activity against acetyl ester, butanoate ester and hexadecanoate ester. Plays a key role in sperm capacitation in response to progesterone by mediating degradation of 2AG, an inhibitor of the sperm calcium channel CatSper, leading to calcium influx via CatSper and sperm activation. Involved in acrosomal reaction. May also play a role in smooth muscle cells migration. The sequence is that of Monoacylglycerol lipase ABHD2 (Abhd2) from Mus musculus (Mouse).